The primary structure comprises 641 residues: Threonine--tRNA ligase (641 aa).

The region spanning 1-61 (MPAITLPDGS…DDDVQLEIVT (61 aa)) is the TGS domain. Positions 242–533 (DHRRIGRAQN…LIEHYAGALP (292 aa)) are catalytic. Zn(2+)-binding residues include cysteine 333, histidine 384, and histidine 510.

Belongs to the class-II aminoacyl-tRNA synthetase family. In terms of assembly, homodimer. The cofactor is Zn(2+).

Its subcellular location is the cytoplasm. It carries out the reaction tRNA(Thr) + L-threonine + ATP = L-threonyl-tRNA(Thr) + AMP + diphosphate + H(+). Functionally, catalyzes the attachment of threonine to tRNA(Thr) in a two-step reaction: L-threonine is first activated by ATP to form Thr-AMP and then transferred to the acceptor end of tRNA(Thr). Also edits incorrectly charged L-seryl-tRNA(Thr). The polypeptide is Threonine--tRNA ligase (Alkalilimnicola ehrlichii (strain ATCC BAA-1101 / DSM 17681 / MLHE-1)).